The chain runs to 119 residues: T cell receptor alpha variable 29/delta variable 5 (119 aa).

A signal peptide spans 1 to 21; that stretch reads MAMLLGASVLILWLQPDWVNS. Residues 22–119 enclose the Ig-like domain; that stretch reads QQKNDDQQVK…DSAVYFCAAS (98 aa). A disulfide bridge connects residues Cys49 and Cys116. The N-linked (GlcNAc...) asparagine glycan is linked to Asn93.

Alpha-beta TR is a heterodimer composed of an alpha and beta chain; disulfide-linked. The alpha-beta TR is associated with the transmembrane signaling CD3 coreceptor proteins to form the TR-CD3 (TcR or TCR). The assembly of alpha-beta TR heterodimers with CD3 occurs in the endoplasmic reticulum where a single alpha-beta TR heterodimer associates with one CD3D-CD3E heterodimer, one CD3G-CD3E heterodimer and one CD247 homodimer forming a stable octameric structure. CD3D-CD3E and CD3G-CD3E heterodimers preferentially associate with TR alpha and TR beta chains, respectively. The association of the CD247 homodimer is the last step of TcR assembly in the endoplasmic reticulum and is required for transport to the cell surface.

The protein resides in the cell membrane. V region of the variable domain of T cell receptor (TR) alpha chain that participates in the antigen recognition. Alpha-beta T cell receptors are antigen specific receptors which are essential to the immune response and are present on the cell surface of T lymphocytes. Recognize peptide-major histocompatibility (MH) (pMH) complexes that are displayed by antigen presenting cells (APC), a prerequisite for efficient T cell adaptive immunity against pathogens. Binding of alpha-beta TR to pMH complex initiates TR-CD3 clustering on the cell surface and intracellular activation of LCK that phosphorylates the ITAM motifs of CD3G, CD3D, CD3E and CD247 enabling the recruitment of ZAP70. In turn ZAP70 phosphorylates LAT, which recruits numerous signaling molecules to form the LAT signalosome. The LAT signalosome propagates signal branching to three major signaling pathways, the calcium, the mitogen-activated protein kinase (MAPK) kinase and the nuclear factor NF-kappa-B (NF-kB) pathways, leading to the mobilization of transcription factors that are critical for gene expression and essential for T cell growth and differentiation. The T cell repertoire is generated in the thymus, by V-(D)-J rearrangement. This repertoire is then shaped by intrathymic selection events to generate a peripheral T cell pool of self-MH restricted, non-autoaggressive T cells. Post-thymic interaction of alpha-beta TR with the pMH complexes shapes TR structural and functional avidity. The polypeptide is T cell receptor alpha variable 29/delta variable 5 (Homo sapiens (Human)).